A 482-amino-acid chain; its full sequence is MKFIIKLFPEITIKSQSVRLRFIKILTGNIRNVLKHYDETLAVVRHWDNIEVRAKDENQRLAIRDALTRIPGIHHILEVEDVPFTDMHDIFEKALVQYRDQLEGKTFCVRVKRRGKHDFSSIDVERYVGGGLNQHIESARVKLTNPEVTVHLEVEDDRLLLIKGRYEGIGGFPIGTQEDVLSLISGGFDSGVSSYMLMRRGCRVHYCFFNLGGAAHEIGVRQVAHYLWNRFGSSHRVRFVAINFEPVVGEILEKIDDGQMGVILKRMMVRAASKVAERYGVQALVTGEALGQVSSQTLTNLRLIDNVSDTLILRPLISYDKEHIINLARQIGTEDFARTMPEYCGVISKSPTVKAVKSKIEAEEEKFDFSILDKVVEEANNVDIREIAQQTEQEVVEVETVNGFGPNDVILDIRSIDEQEDKPLKVEGIDVVSLPFYKLSTKFGDLDQNRTWLLWCERGVMSRLQALYLREQGFNNVKVYRL.

Positions 61–165 constitute a THUMP domain; that stretch reads LAIRDALTRI…DDRLLLIKGR (105 aa). Residues 183–184, lysine 265, glycine 287, and glutamine 296 each bind ATP; that span reads LI. The cysteines at positions 344 and 456 are disulfide-linked. Residues 404-482 enclose the Rhodanese domain; sequence FGPNDVILDI…GFNNVKVYRL (79 aa). Residue cysteine 456 is the Cysteine persulfide intermediate of the active site.

Belongs to the ThiI family.

The protein resides in the cytoplasm. The catalysed reaction is [ThiI sulfur-carrier protein]-S-sulfanyl-L-cysteine + a uridine in tRNA + 2 reduced [2Fe-2S]-[ferredoxin] + ATP + H(+) = [ThiI sulfur-carrier protein]-L-cysteine + a 4-thiouridine in tRNA + 2 oxidized [2Fe-2S]-[ferredoxin] + AMP + diphosphate. It catalyses the reaction [ThiS sulfur-carrier protein]-C-terminal Gly-Gly-AMP + S-sulfanyl-L-cysteinyl-[cysteine desulfurase] + AH2 = [ThiS sulfur-carrier protein]-C-terminal-Gly-aminoethanethioate + L-cysteinyl-[cysteine desulfurase] + A + AMP + 2 H(+). The protein operates within cofactor biosynthesis; thiamine diphosphate biosynthesis. Catalyzes the ATP-dependent transfer of a sulfur to tRNA to produce 4-thiouridine in position 8 of tRNAs, which functions as a near-UV photosensor. Also catalyzes the transfer of sulfur to the sulfur carrier protein ThiS, forming ThiS-thiocarboxylate. This is a step in the synthesis of thiazole, in the thiamine biosynthesis pathway. The sulfur is donated as persulfide by IscS. This chain is tRNA sulfurtransferase, found in Shigella boydii serotype 18 (strain CDC 3083-94 / BS512).